The sequence spans 198 residues: Ribonuclease HII (198 aa).

Residues 9 to 198 (ITVAGADEAG…LLPDQLKIDF (190 aa)) enclose the RNase H type-2 domain. 3 residues coordinate a divalent metal cation: aspartate 15, glutamate 16, and aspartate 107.

It belongs to the RNase HII family. It depends on Mn(2+) as a cofactor. Mg(2+) is required as a cofactor.

It localises to the cytoplasm. It carries out the reaction Endonucleolytic cleavage to 5'-phosphomonoester.. Functionally, endonuclease that specifically degrades the RNA of RNA-DNA hybrids. This is Ribonuclease HII from Christiangramia forsetii (strain DSM 17595 / CGMCC 1.15422 / KT0803) (Gramella forsetii).